A 339-amino-acid chain; its full sequence is NADH-quinone oxidoreductase subunit H (339 aa).

9 helical membrane-spanning segments follow: residues 9-29 (IFPLIIIALKVVAITTPLILC), 50-70 (PNVVGPFGLLQPIADAVKLLF), 82-102 (ILFILAPMITFILSLIGWAVI), 115-135 (VGVLYILAISSLSVYGIIIAG), 161-181 (MGLVIITVLLTTGTLNLSEII), 187-207 (MPWWIDLMLLPMGVVFFISVL), 235-255 (MGFALFFLGEYANMILVSAMT), 275-295 (IPGFFWFVFKVGFLLFCFLWI), and 311-331 (GWKVFLPLTLFWVVLVSSVLV).

The protein belongs to the complex I subunit 1 family. As to quaternary structure, NDH-1 is composed of 14 different subunits. Subunits NuoA, H, J, K, L, M, N constitute the membrane sector of the complex.

It is found in the cell inner membrane. The catalysed reaction is a quinone + NADH + 5 H(+)(in) = a quinol + NAD(+) + 4 H(+)(out). Its function is as follows. NDH-1 shuttles electrons from NADH, via FMN and iron-sulfur (Fe-S) centers, to quinones in the respiratory chain. The immediate electron acceptor for the enzyme in this species is believed to be ubiquinone. Couples the redox reaction to proton translocation (for every two electrons transferred, four hydrogen ions are translocated across the cytoplasmic membrane), and thus conserves the redox energy in a proton gradient. This subunit may bind ubiquinone. This chain is NADH-quinone oxidoreductase subunit H, found in Rickettsia peacockii (strain Rustic).